The following is a 399-amino-acid chain: 26S proteasome regulatory subunit S10B homolog B (399 aa).

ATP is bound at residue 180 to 187 (GPPGTGKT). A Glycyl lysine isopeptide (Lys-Gly) (interchain with G-Cter in ubiquitin) cross-link involves residue Lys203.

Belongs to the AAA ATPase family. In terms of assembly, component of the 19S regulatory particle (RP/PA700) base subcomplex of the 26S proteasome. The 26S proteasome is composed of a core protease (CP), known as the 20S proteasome, capped at one or both ends by the 19S regulatory particle (RP/PA700). The RP/PA700 complex is composed of at least 17 different subunits in two subcomplexes, the base and the lid, which form the portions proximal and distal to the 20S proteolytic core, respectively.

It localises to the cytoplasm. Its subcellular location is the nucleus. Its function is as follows. The 26S proteasome is involved in the ATP-dependent degradation of ubiquitinated proteins. The regulatory (or ATPase) complex confers ATP dependency and substrate specificity to the 26S complex. The protein is 26S proteasome regulatory subunit S10B homolog B (RPT4B) of Arabidopsis thaliana (Mouse-ear cress).